Consider the following 155-residue polypeptide: Ribosome maturation factor RimP (155 aa).

This sequence belongs to the RimP family.

The protein resides in the cytoplasm. In terms of biological role, required for maturation of 30S ribosomal subunits. The polypeptide is Ribosome maturation factor RimP (Staphylococcus saprophyticus subsp. saprophyticus (strain ATCC 15305 / DSM 20229 / NCIMB 8711 / NCTC 7292 / S-41)).